Consider the following 398-residue polypeptide: Phosphoglycerate kinase (398 aa).

Residues 21 to 23 (DFN), Arg36, 59 to 62 (HLGR), Arg119, and Arg157 contribute to the substrate site. ATP-binding positions include Lys208, Gly296, Glu327, and 354–357 (GGDS).

Belongs to the phosphoglycerate kinase family. Monomer.

The protein localises to the cytoplasm. The catalysed reaction is (2R)-3-phosphoglycerate + ATP = (2R)-3-phospho-glyceroyl phosphate + ADP. It functions in the pathway carbohydrate degradation; glycolysis; pyruvate from D-glyceraldehyde 3-phosphate: step 2/5. The chain is Phosphoglycerate kinase from Streptococcus pyogenes serotype M5 (strain Manfredo).